A 143-amino-acid polypeptide reads, in one-letter code: Large ribosomal subunit protein uL15 (143 aa).

Residues 1 to 52 (MKLNTLAPAAGSKSAPKRLGRGIGSGLGKTSGKGHKGQKARSGGYHKVGFEG) form a disordered region. Positions 21-31 (RGIGSGLGKTS) are enriched in gly residues.

Belongs to the universal ribosomal protein uL15 family. Part of the 50S ribosomal subunit.

In terms of biological role, binds to the 23S rRNA. The protein is Large ribosomal subunit protein uL15 of Francisella tularensis subsp. tularensis (strain FSC 198).